Reading from the N-terminus, the 182-residue chain is MPPTKLPESGNPLVFFDITIGGEPLGRITFELFKDVVPKTAENFRQFCTGESKTPVGRPQGYKGSKFHRIIPNFMCQGGDFLNGDGTGSTCIWGFKSFEDENFTLKHDQPGLLSMANAGPNTNGSQFFITTVPTPFLDNKHVVFGKVFEGMDVVKKMEATKTGYRGKDMPNLDVVISQCGEM.

A PPIase cyclophilin-type domain is found at 15–181; sequence FFDITIGGEP…LDVVISQCGE (167 aa).

Belongs to the cyclophilin-type PPIase family. PPIase H subfamily.

The protein resides in the nucleus. The enzyme catalyses [protein]-peptidylproline (omega=180) = [protein]-peptidylproline (omega=0). PPIases accelerate the folding of proteins. It catalyzes the cis-trans isomerization of proline imidic peptide bonds in oligopeptides. The protein is Peptidyl-prolyl cis-trans isomerase H (CYP3) of Gibberella zeae (strain ATCC MYA-4620 / CBS 123657 / FGSC 9075 / NRRL 31084 / PH-1) (Wheat head blight fungus).